The chain runs to 238 residues: 1-(5-phosphoribosyl)-5-[(5-phosphoribosylamino)methylideneamino] imidazole-4-carboxamide isomerase (238 aa).

The active-site Proton acceptor is the D8. The active-site Proton donor is the D129.

The protein belongs to the HisA/HisF family.

It localises to the cytoplasm. It carries out the reaction 1-(5-phospho-beta-D-ribosyl)-5-[(5-phospho-beta-D-ribosylamino)methylideneamino]imidazole-4-carboxamide = 5-[(5-phospho-1-deoxy-D-ribulos-1-ylimino)methylamino]-1-(5-phospho-beta-D-ribosyl)imidazole-4-carboxamide. It functions in the pathway amino-acid biosynthesis; L-histidine biosynthesis; L-histidine from 5-phospho-alpha-D-ribose 1-diphosphate: step 4/9. The protein is 1-(5-phosphoribosyl)-5-[(5-phosphoribosylamino)methylideneamino] imidazole-4-carboxamide isomerase of Anaeromyxobacter dehalogenans (strain 2CP-C).